The primary structure comprises 894 residues: Leucine--tRNA ligase, mitochondrial (894 aa).

The N-terminal 9 residues, 1–9 (MLSRPSSRF), are a transit peptide targeting the mitochondrion. Residues 56 to 66 (PYPSGALHIGH) carry the 'HIGH' region motif. The 'KMSKS' region signature appears at 646-650 (KMSKS). Position 649 (K649) interacts with ATP.

Belongs to the class-I aminoacyl-tRNA synthetase family.

It localises to the mitochondrion matrix. The catalysed reaction is tRNA(Leu) + L-leucine + ATP = L-leucyl-tRNA(Leu) + AMP + diphosphate. In terms of biological role, catalyzes the attachment of leucine to tRNA(Leu) in the mitochondrion. The sequence is that of Leucine--tRNA ligase, mitochondrial (NAM2) from Saccharomyces cerevisiae (strain ATCC 204508 / S288c) (Baker's yeast).